A 241-amino-acid polypeptide reads, in one-letter code: Uridylate kinase (241 aa).

Position 15–18 (15–18 (KLSG)) interacts with ATP. The segment at 23–28 (GTEGFG) is involved in allosteric activation by GTP. Position 57 (G57) interacts with UMP. The ATP site is built by G58 and R62. UMP contacts are provided by residues D77 and 138–145 (TGNPFFTT). The ATP site is built by T165, F171, and D174.

This sequence belongs to the UMP kinase family. As to quaternary structure, homohexamer.

It is found in the cytoplasm. The catalysed reaction is UMP + ATP = UDP + ADP. It functions in the pathway pyrimidine metabolism; CTP biosynthesis via de novo pathway; UDP from UMP (UMPK route): step 1/1. With respect to regulation, allosterically activated by GTP. Inhibited by UTP. Functionally, catalyzes the reversible phosphorylation of UMP to UDP. This chain is Uridylate kinase, found in Escherichia coli O139:H28 (strain E24377A / ETEC).